The primary structure comprises 1835 residues: Urea amidolyase (1835 aa).

ATP-binding positions include 122–129 and K747; that span reads GAIIVGKT. The Biotin carboxylation domain occupies 632 to 1075; that stretch reads LFDTVLIANR…STNILNSYQY (444 aa). Positions 751 to 948 constitute an ATP-grasp domain; that stretch reads RQIAQKAGVP…LVEWMIRIAA (198 aa). S803 bears the Phosphoserine mark. ATP-binding residues include E830 and N865. Residues 1754-1832 enclose the Biotinyl-binding domain; sequence DEEEDFPEGA…DSGDIVAVIE (79 aa). K1798 bears the N6-biotinyllysine mark.

Monomer. It depends on biotin as a cofactor.

It catalyses the reaction urea + hydrogencarbonate + ATP = urea-1-carboxylate + ADP + phosphate + H(+). The enzyme catalyses urea-1-carboxylate + H2O + 3 H(+) = 2 NH4(+) + 2 CO2. The protein operates within nitrogen metabolism; urea degradation; CO(2) and NH(3) from urea (allophanate route): step 1/2. Its pathway is nitrogen metabolism; urea degradation; CO(2) and NH(3) from urea (allophanate route): step 2/2. Functionally, hydrolysis of urea to ammonia and CO(2). This is Urea amidolyase (DUR1,2) from Saccharomyces cerevisiae (strain ATCC 204508 / S288c) (Baker's yeast).